A 508-amino-acid polypeptide reads, in one-letter code: WD repeat-containing protein JIP5 (508 aa).

WD repeat units follow at residues 46–94, 105–144, 150–189, 194–234, 252–293, and 344–381; these read LATG…GVET, RHKG…VVKK, GQNV…QTNL, HNGD…EGDF, DQED…LADQ, and SKLD…QLTP. Residues 372–508 form a disordered region; the sequence is DSEKSEQLTP…THGIRRFEGL (137 aa). Over residues 491–508 the composition is skewed to basic and acidic residues; that stretch reads IKPERSMKTHGIRRFEGL.

Belongs to the WD repeat WDR55 family.

The protein resides in the nucleus. It is found in the nucleolus. This Eremothecium gossypii (strain ATCC 10895 / CBS 109.51 / FGSC 9923 / NRRL Y-1056) (Yeast) protein is WD repeat-containing protein JIP5 (JIP5).